The sequence spans 61 residues: 14-3-3-like protein (61 aa).

Belongs to the 14-3-3 family.

This Zea mays (Maize) protein is 14-3-3-like protein.